Consider the following 451-residue polypeptide: UPF0210 protein LMOf2365_0563 (451 aa).

It belongs to the UPF0210 family. As to quaternary structure, homodimer.

In Listeria monocytogenes serotype 4b (strain F2365), this protein is UPF0210 protein LMOf2365_0563.